A 199-amino-acid chain; its full sequence is Small ribosomal subunit protein uS4 (199 aa).

One can recognise an S4 RNA-binding domain in the interval 91–153 (ARLDNVVYRM…SKNFVVIKEA (63 aa)).

The protein belongs to the universal ribosomal protein uS4 family. In terms of assembly, part of the 30S ribosomal subunit. Contacts protein S5. The interaction surface between S4 and S5 is involved in control of translational fidelity.

In terms of biological role, one of the primary rRNA binding proteins, it binds directly to 16S rRNA where it nucleates assembly of the body of the 30S subunit. Functionally, with S5 and S12 plays an important role in translational accuracy. This Exiguobacterium sibiricum (strain DSM 17290 / CCUG 55495 / CIP 109462 / JCM 13490 / 255-15) protein is Small ribosomal subunit protein uS4.